The following is a 303-amino-acid chain: UDP-3-O-acyl-N-acetylglucosamine deacetylase (303 aa).

H78, H237, and D241 together coordinate Zn(2+). Catalysis depends on H264, which acts as the Proton donor.

The protein belongs to the LpxC family. Requires Zn(2+) as cofactor.

It catalyses the reaction a UDP-3-O-[(3R)-3-hydroxyacyl]-N-acetyl-alpha-D-glucosamine + H2O = a UDP-3-O-[(3R)-3-hydroxyacyl]-alpha-D-glucosamine + acetate. Its pathway is glycolipid biosynthesis; lipid IV(A) biosynthesis; lipid IV(A) from (3R)-3-hydroxytetradecanoyl-[acyl-carrier-protein] and UDP-N-acetyl-alpha-D-glucosamine: step 2/6. Its function is as follows. Catalyzes the hydrolysis of UDP-3-O-myristoyl-N-acetylglucosamine to form UDP-3-O-myristoylglucosamine and acetate, the committed step in lipid A biosynthesis. This is UDP-3-O-acyl-N-acetylglucosamine deacetylase from Pseudomonas fluorescens (strain Pf0-1).